The following is a 258-amino-acid chain: Tryptophan synthase alpha chain (258 aa).

Catalysis depends on proton acceptor residues Glu47 and Asp58.

Belongs to the TrpA family. In terms of assembly, tetramer of two alpha and two beta chains.

It carries out the reaction (1S,2R)-1-C-(indol-3-yl)glycerol 3-phosphate + L-serine = D-glyceraldehyde 3-phosphate + L-tryptophan + H2O. It participates in amino-acid biosynthesis; L-tryptophan biosynthesis; L-tryptophan from chorismate: step 5/5. The alpha subunit is responsible for the aldol cleavage of indoleglycerol phosphate to indole and glyceraldehyde 3-phosphate. This Bacillus anthracis (strain CDC 684 / NRRL 3495) protein is Tryptophan synthase alpha chain.